The chain runs to 174 residues: Neuromedin-U (174 aa).

A signal peptide spans 1–34 (MLRTESCRPRSPAGQVAAASPLLLLLLLLAWCAG). Positions 35–103 (ACRGAPILPQ…EQDEKDNTKR (69 aa)) are excised as a propeptide. A Methionine sulfoxide; partial modification is found at M139. The residue at position 166 (N166) is an Asparagine amide. Residues 170-174 (SAGFI) constitute a propeptide that is removed on maturation.

Belongs to the NmU family. Expressed throughout the enteric nervous system with highest levels being found in the jejunum.

It is found in the secreted. Its function is as follows. Ligand for receptors NMUR1 and NMUR2. Stimulates muscle contractions of specific regions of the gastrointestinal tract. In humans, NmU stimulates contractions of the ileum and urinary bladder. In terms of biological role, does not function as a ligand for either NMUR1 or NMUR2. Indirectly induces prolactin release although its potency is much lower than that of neuromedin precursor-related peptide 36. Functionally, does not function as a ligand for either NMUR1 or NMUR2. Indirectly induces prolactin release from lactotroph cells in the pituitary gland, probably via the hypothalamic dopaminergic system. This is Neuromedin-U (NMU) from Homo sapiens (Human).